Consider the following 70-residue polypeptide: Putative membrane protein insertion efficiency factor (70 aa).

The protein belongs to the UPF0161 family.

The protein localises to the cell membrane. Functionally, could be involved in insertion of integral membrane proteins into the membrane. In Finegoldia magna (strain ATCC 29328 / DSM 20472 / WAL 2508) (Peptostreptococcus magnus), this protein is Putative membrane protein insertion efficiency factor.